We begin with the raw amino-acid sequence, 178 residues long: Cytochrome b6-f complex iron-sulfur subunit (178 aa).

The chain crosses the membrane as a helical span at residues 20–42 (LLTFGTVTGVALGALYPVAQYFT). One can recognise a Rieske domain in the interval 71–161 (THPVGDRSLV…VSIEDDQVLV (91 aa)). [2Fe-2S] cluster-binding residues include cysteine 107, histidine 109, cysteine 125, and histidine 128. Cysteines 112 and 127 form a disulfide.

The protein belongs to the Rieske iron-sulfur protein family. The 4 large subunits of the cytochrome b6-f complex are cytochrome b6, subunit IV (17 kDa polypeptide, PetD), cytochrome f and the Rieske protein, while the 4 small subunits are PetG, PetL, PetM and PetN. The complex functions as a dimer. Requires [2Fe-2S] cluster as cofactor.

It localises to the cellular thylakoid membrane. The enzyme catalyses 2 oxidized [plastocyanin] + a plastoquinol + 2 H(+)(in) = 2 reduced [plastocyanin] + a plastoquinone + 4 H(+)(out). Its function is as follows. Component of the cytochrome b6-f complex, which mediates electron transfer between photosystem II (PSII) and photosystem I (PSI), cyclic electron flow around PSI, and state transitions. This is Cytochrome b6-f complex iron-sulfur subunit from Prochlorococcus marinus (strain NATL1A).